Consider the following 187-residue polypeptide: Phosphatidylethanolamine-binding protein 1 (187 aa).

The residue at position 2 (A2) is an N-acetylalanine; in peptide hippocampal cholinergic neurostimulating. Residues S6 and S13 each carry the phosphoserine modification. Position 42 is a phosphothreonine (T42). Phosphoserine is present on residues S52, S54, S98, and S153. The tract at residues 93-134 (KGNDISSGTVLSEYVGSGPPKDTGLHRYVWLVYEQEQPLNCD) is interaction with RAF1.

The protein belongs to the phosphatidylethanolamine-binding protein family. In terms of assembly, has a tendency to form dimers by disulfide cross-linking. Interacts with RAF1 and this interaction is enhanced if RAF1 is phosphorylated on residues 'Ser-338', 'Ser-339', 'Tyr-340' and 'Tyr-341'. Interacts with ALOX15; in response to IL13/interleukin-13, prevents the interaction of PEBP1 with RAF1 to activate the ERK signaling cascade. Major component of epididymal secretions and sperm plasma membranes. It is present in cytosols from a variety of other tissues. Highly expressed in brain.

The protein resides in the cytoplasm. It localises to the membrane. Binds ATP, opioids and phosphatidylethanolamine. Has lower affinity for phosphatidylinositol and phosphatidylcholine. Serine protease inhibitor which inhibits thrombin, neuropsin and chymotrypsin but not trypsin, tissue type plasminogen activator and elastase. Inhibits the kinase activity of RAF1 by inhibiting its activation and by dissociating the RAF1/MEK complex and acting as a competitive inhibitor of MEK phosphorylation. Functionally, HCNP may be involved in the function of the presynaptic cholinergic neurons of the central nervous system. HCNP increases the production of choline acetyltransferase but not acetylcholinesterase. Seems to be mediated by a specific receptor. This Rattus norvegicus (Rat) protein is Phosphatidylethanolamine-binding protein 1 (Pebp1).